Here is a 370-residue protein sequence, read N- to C-terminus: UDP-N-acetylglucosamine--N-acetylmuramyl-(pentapeptide) pyrophosphoryl-undecaprenol N-acetylglucosamine transferase (370 aa).

UDP-N-acetyl-alpha-D-glucosamine is bound by residues 15–17, Asn129, Arg170, Ser200, Ile253, and Gln298; that span reads TGG.

It belongs to the glycosyltransferase 28 family. MurG subfamily.

It is found in the cell inner membrane. It carries out the reaction di-trans,octa-cis-undecaprenyl diphospho-N-acetyl-alpha-D-muramoyl-L-alanyl-D-glutamyl-meso-2,6-diaminopimeloyl-D-alanyl-D-alanine + UDP-N-acetyl-alpha-D-glucosamine = di-trans,octa-cis-undecaprenyl diphospho-[N-acetyl-alpha-D-glucosaminyl-(1-&gt;4)]-N-acetyl-alpha-D-muramoyl-L-alanyl-D-glutamyl-meso-2,6-diaminopimeloyl-D-alanyl-D-alanine + UDP + H(+). Its pathway is cell wall biogenesis; peptidoglycan biosynthesis. Its function is as follows. Cell wall formation. Catalyzes the transfer of a GlcNAc subunit on undecaprenyl-pyrophosphoryl-MurNAc-pentapeptide (lipid intermediate I) to form undecaprenyl-pyrophosphoryl-MurNAc-(pentapeptide)GlcNAc (lipid intermediate II). The polypeptide is UDP-N-acetylglucosamine--N-acetylmuramyl-(pentapeptide) pyrophosphoryl-undecaprenol N-acetylglucosamine transferase (Salinibacter ruber (strain DSM 13855 / M31)).